Here is a 451-residue protein sequence, read N- to C-terminus: Methylenetetrahydrofolate--tRNA-(uracil-5-)-methyltransferase TrmFO (451 aa).

Gly9–Gly14 serves as a coordination point for FAD.

This sequence belongs to the MnmG family. TrmFO subfamily. FAD is required as a cofactor.

The protein resides in the cytoplasm. It catalyses the reaction uridine(54) in tRNA + (6R)-5,10-methylene-5,6,7,8-tetrahydrofolate + NADH + H(+) = 5-methyluridine(54) in tRNA + (6S)-5,6,7,8-tetrahydrofolate + NAD(+). It carries out the reaction uridine(54) in tRNA + (6R)-5,10-methylene-5,6,7,8-tetrahydrofolate + NADPH + H(+) = 5-methyluridine(54) in tRNA + (6S)-5,6,7,8-tetrahydrofolate + NADP(+). Functionally, catalyzes the folate-dependent formation of 5-methyl-uridine at position 54 (M-5-U54) in all tRNAs. The chain is Methylenetetrahydrofolate--tRNA-(uracil-5-)-methyltransferase TrmFO from Dinoroseobacter shibae (strain DSM 16493 / NCIMB 14021 / DFL 12).